The following is an 860-amino-acid chain: DNA mismatch repair protein MutS (860 aa).

607–614 (GPNMSGKS) is an ATP binding site.

Belongs to the DNA mismatch repair MutS family.

Its function is as follows. This protein is involved in the repair of mismatches in DNA. It is possible that it carries out the mismatch recognition step. This protein has a weak ATPase activity. This chain is DNA mismatch repair protein MutS, found in Listeria innocua serovar 6a (strain ATCC BAA-680 / CLIP 11262).